The sequence spans 529 residues: Tyrosinase (529 aa).

The signal sequence occupies residues 1–18 (MLLAALCCLLWSFRTSAG). Residues 19–472 (HFPRACASSK…IKPFLEQASR (454 aa)) are Lumenal-facing. N-linked (GlcNAc...) asparagine glycosylation is found at N86, N111, and N161. H180, H202, and H211 together coordinate Cu cation. 2 N-linked (GlcNAc...) asparagine glycosylation sites follow: N230 and N336. Cu cation is bound by residues H362 and H366. A glycan (N-linked (GlcNAc...) asparagine) is linked at N370. Cu cation is bound at residue H389. A helical membrane pass occupies residues 473–495 (IWPWLIGAAVVGSVLTAVLGRLT). Residues 496-529 (SLLCRRKRKQLREERQPLLMEKEDYHSLLYQTHV) lie on the Cytoplasmic side of the membrane.

The protein belongs to the tyrosinase family. As to quaternary structure, forms an OPN3-dependent complex with DCT in response to blue light in melanocytes. The cofactor is Cu(2+). In terms of processing, glycosylated.

It is found in the melanosome membrane. The protein localises to the melanosome. It carries out the reaction 2 L-dopa + O2 = 2 L-dopaquinone + 2 H2O. The enzyme catalyses L-tyrosine + O2 = L-dopaquinone + H2O. It catalyses the reaction 2 5,6-dihydroxyindole-2-carboxylate + O2 = 2 indole-5,6-quinone-2-carboxylate + 2 H2O. This is a copper-containing oxidase that functions in the formation of pigments such as melanins and other polyphenolic compounds. Catalyzes the initial and rate limiting step in the cascade of reactions leading to melanin production from tyrosine. In addition to hydroxylating tyrosine to DOPA (3,4-dihydroxyphenylalanine), also catalyzes the oxidation of DOPA to DOPA-quinone, and possibly the oxidation of DHI (5,6-dihydroxyindole) to indole-5,6 quinone. In Felis catus (Cat), this protein is Tyrosinase (TYR).